The following is a 208-amino-acid chain: Methenyltetrahydrofolate cyclohydrolase (208 aa).

Residues 25 to 46 (GAAAISGAMGAALVSMVCNLTI) form a helical membrane-spanning segment.

Belongs to the cyclodeaminase/cyclohydrolase family. Homodimer.

It localises to the membrane. It catalyses the reaction (6R)-5,10-methenyltetrahydrofolate + H2O = (6R)-10-formyltetrahydrofolate + H(+). It participates in one-carbon metabolism; formaldehyde assimilation via serine pathway. In terms of biological role, required for both C1 and C2 metabolism. The protein is Methenyltetrahydrofolate cyclohydrolase (fchA) of Methylorubrum extorquens (strain ATCC 14718 / DSM 1338 / JCM 2805 / NCIMB 9133 / AM1) (Methylobacterium extorquens).